Consider the following 354-residue polypeptide: S-adenosylmethionine:tRNA ribosyltransferase-isomerase (354 aa).

The protein belongs to the QueA family. Monomer.

It is found in the cytoplasm. The catalysed reaction is 7-aminomethyl-7-carbaguanosine(34) in tRNA + S-adenosyl-L-methionine = epoxyqueuosine(34) in tRNA + adenine + L-methionine + 2 H(+). It functions in the pathway tRNA modification; tRNA-queuosine biosynthesis. Functionally, transfers and isomerizes the ribose moiety from AdoMet to the 7-aminomethyl group of 7-deazaguanine (preQ1-tRNA) to give epoxyqueuosine (oQ-tRNA). The polypeptide is S-adenosylmethionine:tRNA ribosyltransferase-isomerase (Azorhizobium caulinodans (strain ATCC 43989 / DSM 5975 / JCM 20966 / LMG 6465 / NBRC 14845 / NCIMB 13405 / ORS 571)).